A 385-amino-acid polypeptide reads, in one-letter code: Guanine nucleotide-binding protein alpha-5 subunit (385 aa).

Residue G2 is the site of N-myristoyl glycine attachment. The S-palmitoyl cysteine moiety is linked to residue C6. Positions 32–385 (RKIKMLLLGV…GKNYEDTNLE (354 aa)) constitute a G-alpha domain. The G1 motif stretch occupies residues 35 to 48 (KMLLLGVTDSGKST). GTP-binding positions include 40 to 47 (GVTDSGKS), 174 to 180 (IHMRQTT), 199 to 203 (DVGGQ), 298 to 301 (NKKD), and A357. Mg(2+) contacts are provided by S47 and T180. Residues 172–180 (DLIHMRQTT) form a G2 motif region. The interval 195 to 204 (IRLIDVGGQK) is G3 motif. The G4 motif stretch occupies residues 294–301 (MLFLNKKD). The segment at 355-360 (TQATVT) is G5 motif.

Belongs to the G-alpha family. As to quaternary structure, g proteins are composed of 3 units; alpha, beta and gamma. The alpha chain contains the guanine nucleotide binding site.

Its function is as follows. Guanine nucleotide-binding proteins (G proteins) are involved as modulators or transducers in various transmembrane signaling systems. The chain is Guanine nucleotide-binding protein alpha-5 subunit (gpa-5) from Caenorhabditis elegans.